The chain runs to 538 residues: Interleukin-21 receptor (538 aa).

Residues 1-19 form the signal peptide; it reads MPRGWAAPLLLLLLQGGWG. 3 cysteine pairs are disulfide-bonded: Cys20–Cys109, Cys25–Cys35, and Cys65–Cys81. Over 20–232 the chain is Extracellular; the sequence is CPDLVCYTDY…FQTQSEELKE (213 aa). Fibronectin type-III domains are found at residues 21–118 and 119–228; these read PDLV…AESI and KPAP…TQSE. N-linked (GlcNAc...) asparagine glycans are attached at residues Asn73, Asn97, Asn104, Asn125, and Asn135. C-linked (Man) tryptophan glycosylation occurs at Trp214. The WSXWS motif motif lies at 214 to 218; it reads WSEWS. A helical membrane pass occupies residues 233–253; sequence GWNPHLLLLLLLVIVFIPAFW. Over 254–538 the chain is Cytoplasmic; that stretch reads SLKTHPLWRL…PLSSPGPQAS (285 aa). A Box 1 motif motif is present at residues 266–274; that stretch reads KIWAVPSPE. 2 disordered regions span residues 342–367 and 457–487; these read ESDG…SEER and EDWA…GLDM.

The protein belongs to the type I cytokine receptor family. Type 4 subfamily. In terms of assembly, heterodimer with the common gamma subunit. Associates with JAK1. In terms of processing, C-mannosylated at Trp-214 in the WSXWS motif, the sugar chain makes extensive hydrogen bonds with Asn-73 sugar, and bridges the two fibronectin domains transforming the V-shaped receptor into an A-frame. In terms of tissue distribution, selectively expressed in lymphoid tissues. Most highly expressed in thymus and spleen.

The protein resides in the membrane. Functionally, this is a receptor for interleukin-21. This is Interleukin-21 receptor (IL21R) from Homo sapiens (Human).